Reading from the N-terminus, the 329-residue chain is Ribosomal RNA small subunit methyltransferase H (329 aa).

S-adenosyl-L-methionine is bound by residues 46–48 (GGH), D65, F92, D113, and H120. A disordered region spans residues 295 to 329 (RGAERPSPAEVAANPRAASARLRAAEKIRDTREAA). The segment covering 317 to 329 (RAAEKIRDTREAA) has biased composition (basic and acidic residues).

The protein belongs to the methyltransferase superfamily. RsmH family.

The protein localises to the cytoplasm. It catalyses the reaction cytidine(1402) in 16S rRNA + S-adenosyl-L-methionine = N(4)-methylcytidine(1402) in 16S rRNA + S-adenosyl-L-homocysteine + H(+). In terms of biological role, specifically methylates the N4 position of cytidine in position 1402 (C1402) of 16S rRNA. The polypeptide is Ribosomal RNA small subunit methyltransferase H (Acidothermus cellulolyticus (strain ATCC 43068 / DSM 8971 / 11B)).